The primary structure comprises 72 residues: SRY-related protein MG44 (72 aa).

The HMG box DNA-binding region spans 1–69; sequence VKRPMNAFMV…KHMADYPNYK (69 aa).

Its subcellular location is the nucleus. The chain is SRY-related protein MG44 from Tarentola mauritanica (Common wall gecko).